The primary structure comprises 176 residues: Large ribosomal subunit protein uL6 (176 aa).

This sequence belongs to the universal ribosomal protein uL6 family. As to quaternary structure, part of the 50S ribosomal subunit.

In terms of biological role, this protein binds to the 23S rRNA, and is important in its secondary structure. It is located near the subunit interface in the base of the L7/L12 stalk, and near the tRNA binding site of the peptidyltransferase center. In Burkholderia vietnamiensis (strain G4 / LMG 22486) (Burkholderia cepacia (strain R1808)), this protein is Large ribosomal subunit protein uL6.